We begin with the raw amino-acid sequence, 1420 residues long: DNA-directed RNA polymerase subunit beta' (1420 aa).

The Zn(2+) site is built by cysteine 72, cysteine 74, cysteine 87, and cysteine 90. The Mg(2+) site is built by aspartate 462, aspartate 464, and aspartate 466. 4 residues coordinate Zn(2+): cysteine 816, cysteine 896, cysteine 903, and cysteine 906.

It belongs to the RNA polymerase beta' chain family. As to quaternary structure, the RNAP catalytic core consists of 2 alpha, 1 beta, 1 beta' and 1 omega subunit. When a sigma factor is associated with the core the holoenzyme is formed, which can initiate transcription. The cofactor is Mg(2+). Zn(2+) serves as cofactor.

It carries out the reaction RNA(n) + a ribonucleoside 5'-triphosphate = RNA(n+1) + diphosphate. Functionally, DNA-dependent RNA polymerase catalyzes the transcription of DNA into RNA using the four ribonucleoside triphosphates as substrates. The sequence is that of DNA-directed RNA polymerase subunit beta' from Blochmanniella floridana.